The following is a 296-amino-acid chain: Probable endonuclease 4 (296 aa).

Residues H68, H109, E144, D178, H181, H213, D226, H228, and E258 each contribute to the Zn(2+) site.

The protein belongs to the AP endonuclease 2 family. It depends on Zn(2+) as a cofactor.

It catalyses the reaction Endonucleolytic cleavage to 5'-phosphooligonucleotide end-products.. Endonuclease IV plays a role in DNA repair. It cleaves phosphodiester bonds at apurinic or apyrimidinic (AP) sites, generating a 3'-hydroxyl group and a 5'-terminal sugar phosphate. The chain is Probable endonuclease 4 from Staphylococcus carnosus (strain TM300).